The sequence spans 1265 residues: MTIDKLKKSIKFNIDRGGTFTDIYAEFPYEPYYIVEKLLSVDPENYSDAPREGIRRILERIQGKSISKENVDTYAIKSIRMGTTVGTNALLERKGEKVLLVTSKGFRDLLQIGNQSRPKIFELNITKPELIYNSVVELDERVQIVTNDQVLNDIKLESPNSLKKGTTGDYIKVLEIPNRDKIKSELLKYFVKGIKSIAVVFIHSYTFHDHELLVGEIAKEIGFEHISLSHQLMPMIKAVPRGLTSCVDAYLTPLIELYIKNFTKGFDSNIGDVDISFMMSDGGLCPVDSFRGFRSILSGPAGGVVGYSKTTSTVIESHKNNNGNNEIKQQPIIGFDMGGTSTDVSRYNGTLDHVFETEISGLTIQAPQLDIHTVAAGGGSRLFFKSGLFLVGPESVGAHPGPVCYKKNGQLAITDANLLLGRLLPEYFPPIFGPNQNEPLDLEATKKAFKELTDEINQFQQNNNLPLMTEDQVAFGFIRVANEAMCRPIRNITEAKGFDCSQHVLACFGGAGGQHSCSIAQNLGMPKVFIHRFSGILSAYGLGLADLVIDTQEPCSLIYNKENKSTFEKQLNQLKENAKQQLLNKGFPEEEIFCEGFLNLRFSGTDTAMMIKTPDNHDYEAEFKSNYKREFGFLILGRDLLIDDIRVRVHARGSDLNSLRINDSTGEPLKPETIQKCYFESVGRIDTPIYLLKSLCGGDSIDGPAIIIDNTTTIVVEPNCKANILKPSGNIEILIGGGKSKTVTTELDPIMLSVFSHRFMSIAEQMGKIIIRTSISTNIKERLDFSCALFSPDGGLVANAPAIPIHVGSMQNAVKYQVETLGSNWKEGEVVLSNHPQAGGSHLPDLTVMTPVYHKGEIVFFVASRGHHADIGGITPGSMPPFSKSISEEGAAIMSLKIVKDGHFQEEAVRKTFEKSRNLSDNISDLKAQIAANHKGIQLMQELINHYGLDVVHAYMYHIQKNAELAVRDMLYDISISNNLKPLDTLISTDYMDDGSKIELKLTIDREKKSAIFDWSGSGVEVYGNTNAPTSITLSATIYSLRAMVKSEIPLNQGCLAPILTVIPPGSILNPSFDSAVVGGNVLTSQRLTDVILSAFGACANSQGCMNNLTFGDETLGYYETIAGGTGAGPNFNGFTAVQSHMTNTRITDVEIMEKRYPVIVKEFSVRYGSGGDGKFKGGDGVVREIQFLKNFTVSILSERRSLQPRGLMGGENAERGLNLVLKNNGKYINIGSKNSINIERNESIIIFTPGGGGFGQKDSMITDN.

The protein belongs to the oxoprolinase family. As to quaternary structure, homodimer.

The protein resides in the cytoplasm. It localises to the cytosol. It catalyses the reaction 5-oxo-L-proline + ATP + 2 H2O = L-glutamate + ADP + phosphate + H(+). Catalyzes the cleavage of 5-oxo-L-proline to form L-glutamate coupled to the hydrolysis of ATP to ADP and inorganic phosphate. This chain is 5-oxoprolinase (oplah), found in Dictyostelium discoideum (Social amoeba).